Here is a 232-residue protein sequence, read N- to C-terminus: 2-C-methyl-D-erythritol 4-phosphate cytidylyltransferase (232 aa).

It belongs to the IspD/TarI cytidylyltransferase family. IspD subfamily.

It carries out the reaction 2-C-methyl-D-erythritol 4-phosphate + CTP + H(+) = 4-CDP-2-C-methyl-D-erythritol + diphosphate. The protein operates within isoprenoid biosynthesis; isopentenyl diphosphate biosynthesis via DXP pathway; isopentenyl diphosphate from 1-deoxy-D-xylulose 5-phosphate: step 2/6. In terms of biological role, catalyzes the formation of 4-diphosphocytidyl-2-C-methyl-D-erythritol from CTP and 2-C-methyl-D-erythritol 4-phosphate (MEP). In Shewanella frigidimarina (strain NCIMB 400), this protein is 2-C-methyl-D-erythritol 4-phosphate cytidylyltransferase.